The chain runs to 288 residues: ATP synthase gamma chain (288 aa).

It belongs to the ATPase gamma chain family. In terms of assembly, F-type ATPases have 2 components, CF(1) - the catalytic core - and CF(0) - the membrane proton channel. CF(1) has five subunits: alpha(3), beta(3), gamma(1), delta(1), epsilon(1). CF(0) has three main subunits: a, b and c.

It localises to the cell inner membrane. Functionally, produces ATP from ADP in the presence of a proton gradient across the membrane. The gamma chain is believed to be important in regulating ATPase activity and the flow of protons through the CF(0) complex. In Rickettsia akari (strain Hartford), this protein is ATP synthase gamma chain.